Here is a 292-residue protein sequence, read N- to C-terminus: 5,10-methylenetetrahydrofolate reductase (292 aa).

E26 acts as the Proton donor/acceptor in catalysis. Position 57 (T57) interacts with NADH. Y58, A60, H86, R116, G117, D118, A130, Y150, H154, A157, D163, N166, R169, and K170 together coordinate FAD. D118 contacts (6S)-5-methyl-5,6,7,8-tetrahydrofolate. Residue Q181 coordinates NADH. (6S)-5-methyl-5,6,7,8-tetrahydrofolate contacts are provided by Q181, Q217, and R277.

Belongs to the methylenetetrahydrofolate reductase family. The cofactor is FAD.

The enzyme catalyses (6S)-5-methyl-5,6,7,8-tetrahydrofolate + NAD(+) = (6R)-5,10-methylene-5,6,7,8-tetrahydrofolate + NADH + H(+). It participates in one-carbon metabolism; tetrahydrofolate interconversion. The protein operates within amino-acid biosynthesis; L-methionine biosynthesis via de novo pathway. Catalyzes the NADH-dependent reduction of 5,10-methylenetetrahydrofolate to 5-methyltetrahydrofolate. Is required to provide the methyl group necessary for methionine synthetase to convert homocysteine to methionine; the methyl group is given by 5-methyltetrahydrofolate. This Neisseria meningitidis serogroup B (strain ATCC BAA-335 / MC58) protein is 5,10-methylenetetrahydrofolate reductase (metF).